Here is a 316-residue protein sequence, read N- to C-terminus: Retron Ec73 reverse transcriptase (316 aa).

Residues 1–243 enclose the Reverse transcriptase domain; that stretch reads MRIYSLIDSQ…GSIVVTGLKV (243 aa). Positions 99, 189, and 190 each coordinate Mg(2+). The necessary and required for recognition and binding of RNA stretch occupies residues 247-316; that stretch reads FHITLHRSMK…WIQNLHNKVE (70 aa).

Belongs to the bacterial reverse transcriptase family.

It catalyses the reaction DNA(n) + a 2'-deoxyribonucleoside 5'-triphosphate = DNA(n+1) + diphosphate. In terms of biological role, reverse transcriptase (RT) component of antiviral defense system retron Ec73, composed of a non-coding RNA (ncRNA) followed by a ribosyltransferase/DNA-binding protein then a reverse transcriptase (RT). Expression of this retron confers protection against bacteriophages SECphi4, SECphi6, SECphi27 and P1. At multiplicity of infection (MOI) of 0.02 cultures grow normally when infected with SECphi4 without collapsing, at MOI 2 cultures enter growth stasis. Responsible for synthesis of msDNA-Ec73 (a branched molecule with RNA linked by a 2',5'-phosphodiester bond to ssDNA). The retron transcript serves as primer (from a conserved internal G residue) and template for the reaction, and codes for the RT. Recognizes only its cognate RNA as a primer template. The protein is Retron Ec73 reverse transcriptase of Escherichia coli.